A 204-amino-acid polypeptide reads, in one-letter code: Imidazole glycerol phosphate synthase subunit HisH (204 aa).

The Glutamine amidotransferase type-1 domain occupies 5-204 (KVVIIDTGCA…AKLIQNFLEL (200 aa)). The active-site Nucleophile is Cys-80. Catalysis depends on residues His-186 and Glu-188.

As to quaternary structure, heterodimer of HisH and HisF.

It is found in the cytoplasm. The enzyme catalyses 5-[(5-phospho-1-deoxy-D-ribulos-1-ylimino)methylamino]-1-(5-phospho-beta-D-ribosyl)imidazole-4-carboxamide + L-glutamine = D-erythro-1-(imidazol-4-yl)glycerol 3-phosphate + 5-amino-1-(5-phospho-beta-D-ribosyl)imidazole-4-carboxamide + L-glutamate + H(+). It carries out the reaction L-glutamine + H2O = L-glutamate + NH4(+). The protein operates within amino-acid biosynthesis; L-histidine biosynthesis; L-histidine from 5-phospho-alpha-D-ribose 1-diphosphate: step 5/9. Its function is as follows. IGPS catalyzes the conversion of PRFAR and glutamine to IGP, AICAR and glutamate. The HisH subunit catalyzes the hydrolysis of glutamine to glutamate and ammonia as part of the synthesis of IGP and AICAR. The resulting ammonia molecule is channeled to the active site of HisF. The sequence is that of Imidazole glycerol phosphate synthase subunit HisH from Vibrio parahaemolyticus serotype O3:K6 (strain RIMD 2210633).